The chain runs to 89 residues: Small ribosomal subunit protein bS20 (89 aa).

The segment covering 1-12 (MANIKSAKKRVK) has biased composition (basic residues). The interval 1–20 (MANIKSAKKRVKQTVVRNER) is disordered.

This sequence belongs to the bacterial ribosomal protein bS20 family.

Binds directly to 16S ribosomal RNA. This Xylella fastidiosa (strain 9a5c) protein is Small ribosomal subunit protein bS20.